The primary structure comprises 119 residues: Chorion class B protein M2807 (119 aa).

The left arm stretch occupies residues 1-11 (GGLGGGCGRGF). The central domain stretch occupies residues 12 to 80 (SGGGLPVATA…GNGAVGITRE (69 aa)). Positions 81 to 119 (GGLGYGAGYGDGYGLGYGGYGGGYGLGYGGYGGCGCGCG) are right arm (Gly-rich tandem repeats).

The protein belongs to the chorion protein family.

Its function is as follows. This protein is one of many from the eggshell of the silk moth. The polypeptide is Chorion class B protein M2807 (Bombyx mori (Silk moth)).